Here is a 381-residue protein sequence, read N- to C-terminus: 40-kDa huntingtin-associated protein (381 aa).

Position 2 is an N-acetylalanine (alanine 2). Positions 34 to 36 match the Nuclear localization signal motif; that stretch reads KKR. Positions 221 to 265 are disordered; sequence QLELLPQPPSGPQPPLSGPQPRPVLGSTLPLPQPPDHAPGSVAPS. Positions 226-242 are enriched in pro residues; the sequence is PQPPSGPQPPLSGPQPR.

Interacts with HTT (via C-terminus). Interacts with RAB5A. Found in a complex with F8A1/F8A2/F8A3, HTT and RAB5A; mediates the recruitment of HTT by RAB5A onto early endosomes. Produced abundantly in a wide variety of cell types.

The protein localises to the cytoplasm. Its subcellular location is the nucleus. It localises to the early endosome. The protein resides in the nuclear body. Functionally, RAB5A effector molecule that is involved in vesicular trafficking of early endosomes. Mediates the recruitment of HTT by RAB5A onto early endosomes. The HTT-F8A1/F8A2/F8A3-RAB5A complex stimulates early endosomal interaction with actin filaments and inhibits interaction with microtubules, leading to the reduction of endosome motility. The sequence is that of 40-kDa huntingtin-associated protein (F8a1) from Mus musculus (Mouse).